A 303-amino-acid polypeptide reads, in one-letter code: Coenzyme PQQ synthesis protein B (303 aa).

Belongs to the PqqB family.

Its pathway is cofactor biosynthesis; pyrroloquinoline quinone biosynthesis. May be involved in the transport of PQQ or its precursor to the periplasm. The sequence is that of Coenzyme PQQ synthesis protein B from Acinetobacter baumannii (strain SDF).